The chain runs to 78 residues: Acyl carrier protein (78 aa).

Residues 2 to 77 form the Carrier domain; the sequence is QNIEKKIKKI…SIFDIIKKYV (76 aa). Serine 37 carries the post-translational modification O-(pantetheine 4'-phosphoryl)serine.

The protein belongs to the acyl carrier protein (ACP) family. Post-translationally, 4'-phosphopantetheine is transferred from CoA to a specific serine of apo-ACP by AcpS. This modification is essential for activity because fatty acids are bound in thioester linkage to the sulfhydryl of the prosthetic group.

The protein resides in the cytoplasm. The protein operates within lipid metabolism; fatty acid biosynthesis. Functionally, carrier of the growing fatty acid chain in fatty acid biosynthesis. The polypeptide is Acyl carrier protein (Buchnera aphidicola subsp. Baizongia pistaciae (strain Bp)).